The following is a 593-amino-acid chain: Protein PSP2 (593 aa).

Residues 56-65 show a composition bias toward basic and acidic residues; the sequence is AGEHQRDGHQ. The interval 56–101 is disordered; sequence AGEHQRDGHQQHPHGGHGPMNRSRFSNAGPFGGGSMGDFANHHHPL. 2 positions are modified to phosphoserine: S150 and S238. Disordered regions lie at residues 227–248 and 280–593; these read KPFITKTQRSKSNPFGSAKPVD and DSMA…DMPL. Composition is skewed to polar residues over residues 231 to 241 and 280 to 290; these read TKTQRSKSNPF and DSMATTATGSK. Residue S340 is modified to Phosphoserine. Residues 347–402 are compositionally biased toward basic and acidic residues; sequence SKPDKSDEFKGGDEQGFEKGGDDKAQLDVSNDKDKGSETDVDKQFTFKNVEREHSM. Over residues 408 to 426 the composition is skewed to low complexity; that stretch reads NGNHNNNNGNFRGSNRYRG. Residues R419, R425, and R440 each carry the omega-N-methylarginine modification. R443 carries the post-translational modification Dimethylated arginine. R447 carries the omega-N-methylarginine modification. Residues 449 to 477 show a composition bias toward low complexity; the sequence is GSSYNNNNNNTNDNNNNNNNSSSNNNNGS. Composition is skewed to polar residues over residues 486-497 and 505-516; these read EEGLTSDSSLDA and FTNSTSNTQQYS. Residue S522 is modified to Phosphoserine. Low complexity predominate over residues 534 to 545; it reads RNNGRGNYNSSG. Residues R538, R551, and R575 each carry the omega-N-methylarginine modification. The segment covering 546–563 has biased composition (gly residues); the sequence is MNGGSRGRGFGRGRGFGR. Positions 578–587 are enriched in low complexity; the sequence is SGNYSNYNNR.

It localises to the cytoplasm. Its subcellular location is the P-body. The protein resides in the stress granule. DNA polymerase alpha mutation suppressor. Suppressor of group II intron splicing defects of a mutation in MRS2. May play a role in mitochondrial mRNA splicing. This Saccharomyces cerevisiae (strain ATCC 204508 / S288c) (Baker's yeast) protein is Protein PSP2.